A 596-amino-acid chain; its full sequence is Germinal center kinase 3 (596 aa).

Residues 1-54 (MSSSNLAGNTNTTTTSSAASAAAAHSAANASTITSEYSTTQTTTGTFNTDTLSS) show a composition bias toward low complexity. The tract at residues 1 to 80 (MSSSNLAGNT…PPPPPQVSSP (80 aa)) is disordered. Phosphothreonine; by autocatalysis occurs at positions 13 and 32. The segment covering 67 to 77 (SQPPPPPPPQV) has biased composition (pro residues). A Protein kinase domain is found at 108–386 (YKLDESIGVG…ASELLKYSFF (279 aa)). ATP-binding positions include 114–122 (IGVGATATV) and Lys-137. Ser-190 bears the Phosphoserine; by autocatalysis mark. Residue Asp-240 is the Proton acceptor of the active site. A Phosphothreonine modification is found at Thr-280. Ser-405 carries the phosphoserine; by autocatalysis modification. Position 419 is a phosphoserine (Ser-419). The tract at residues 429-496 (NWEFEYDSPQ…EGGGATTPCP (68 aa)) is disordered. Residues 432–450 (FEYDSPQESDDDSDLEDEE) are compositionally biased toward acidic residues. Gly residues predominate over residues 466-479 (GAAGAAGGATGGAA).

This sequence belongs to the protein kinase superfamily. STE Ser/Thr protein kinase family. STE20 subfamily. In terms of assembly, interacts (via C-terminus) with clh-3; required for the phosphorylation-mediated inhibition of clh-3 function. Interacts (via C-terminus) with wnk-1; the interaction is direct. Post-translationally, phosphorylated at Thr-280 and Ser-419 probably by wnk-1; phosphorylation results in weak activation. Predominantly autophosphorylated at Thr-32 and Ser-190 and weakly autophosphorylated at Thr-13 and Ser-405 in vitro. Ubiquitously expressed with a higher expression in the excretory cell. Expressed in both male and female germ cells; up-regulated in maturing spermatocytes but absent in mature sperm.

It localises to the cytoplasm. It is found in the nucleus. It catalyses the reaction L-seryl-[protein] + ATP = O-phospho-L-seryl-[protein] + ADP + H(+). The enzyme catalyses L-threonyl-[protein] + ATP = O-phospho-L-threonyl-[protein] + ADP + H(+). Its function is as follows. Plays a role in osmotic stress responses by regulating ion homeostasis and by controlling cell volume via the phosphorylation-mediated inhibition of the chloride channel clh-3. In addition, increases gpdh-1 translation upon osmotic stress, likely downstream of wnk-1. Involved in several developmental processes including the tubular formation of the excretory canals, the formation of the intestine and the progression through larval stages. In addition, required for germ line development by controlling meiosis and chromosomal segregation during spermatogenesis. By controlling clh-3 activity, may regulate the development of the excretory canals and fertility. The sequence is that of Germinal center kinase 3 from Caenorhabditis elegans.